A 703-amino-acid chain; its full sequence is Elongation factor G 1 (703 aa).

One can recognise a tr-type G domain in the interval 8–290 (ERYRNIGISA…AVIDFLPSPV (283 aa)). Residues 17–24 (AHIDAGKT), 88–92 (DTPGH), and 142–145 (NKMD) each bind GTP.

Belongs to the TRAFAC class translation factor GTPase superfamily. Classic translation factor GTPase family. EF-G/EF-2 subfamily.

It localises to the cytoplasm. Its function is as follows. Catalyzes the GTP-dependent ribosomal translocation step during translation elongation. During this step, the ribosome changes from the pre-translocational (PRE) to the post-translocational (POST) state as the newly formed A-site-bound peptidyl-tRNA and P-site-bound deacylated tRNA move to the P and E sites, respectively. Catalyzes the coordinated movement of the two tRNA molecules, the mRNA and conformational changes in the ribosome. This chain is Elongation factor G 1, found in Ralstonia nicotianae (strain ATCC BAA-1114 / GMI1000) (Ralstonia solanacearum).